The sequence spans 328 residues: Phospholipid scramblase 1 (328 aa).

Positions 1–93 (MENHSKQTEA…NHPGGPGGTP (93 aa)) are proline-rich domain (PRD). Residues 1 to 96 (MENHSKQTEA…GGPGGTPWMP (96 aa)) form a disordered region. The Cytoplasmic portion of the chain corresponds to 1 to 297 (MENHSKQTEA…IQFPLDLDVK (297 aa)). Positions 18 to 26 (PAGYPPPYP) match the SH3-binding 1 motif. The PPxY motif motif lies at 22–25 (PPPY). The segment covering 28-47 (AAFQGPSDHAAYPIPQAGYQ) has biased composition (low complexity). Pro residues predominate over residues 49–64 (PPGPYPGPQPGYPVPP). The SH3-binding 2 signature appears at 56–64 (PQPGYPVPP). Tyr-83 is subject to Phosphotyrosine; by ABL. Residues 93–101 (PWMPAPPPP) carry the SH3-binding 3 motif. Thr-170 carries the post-translational modification Phosphothreonine; by PKC/PRKCD. 4 S-palmitoyl cysteine lipidation sites follow: Cys-193, Cys-194, Cys-197, and Cys-198. A Nuclear localization signal motif is present at residues 269–275 (SKQWSGF). Residues 298–314 (MKAVMLGACFLIDFMFF) form a helical membrane-spanning segment. Topologically, residues 315–328 (ERTGNEEQRSGAWQ) are extracellular.

This sequence belongs to the phospholipid scramblase family. Forms homooligomers in the presence of calcium. Interacts with ABL. Interacts with RELT, RELL1 and RELL2. Interacts with OXSR1 in the presence of RELT. Interacts with OCLN, TOP2A and TOP2B. Interacts with TRPC1, TRPC4 and TRPC5. Interacts with ILDR1. Ca(2+) serves as cofactor. The cofactor is Mg(2+). Zn(2+) is required as a cofactor. In terms of processing, phosphorylation at Thr-170 by PKC/PKCD increases its phospholipid scramblase activity during both cell stimulation and apoptosis. Phosphorylated by OXSR1 in the presence of RELT. Post-translationally, palmitoylation is required for its phospholipid scramblase activity. Palmitoylation regulates its localization to the cell membrane or the nucleus; trafficking to the cell membrane is dependent upon palmitoylation whereas in the absence of palmitoylation, localizes to the nucleus. In terms of tissue distribution, highly expressed in kidney, lung, liver and bone marrow, slightly in spleen, heart and macrophage.

Its subcellular location is the cell membrane. The protein localises to the nucleus. The protein resides in the cytoplasm. It is found in the perinuclear region. The catalysed reaction is a 1,2-diacyl-sn-glycero-3-phosphocholine(in) = a 1,2-diacyl-sn-glycero-3-phosphocholine(out). It carries out the reaction a 1,2-diacyl-sn-glycero-3-phosphoethanolamine(in) = a 1,2-diacyl-sn-glycero-3-phosphoethanolamine(out). The enzyme catalyses a 1,2-diacyl-sn-glycero-3-phospho-L-serine(in) = a 1,2-diacyl-sn-glycero-3-phospho-L-serine(out). Catalyzes calcium-induced ATP-independent rapid bidirectional and non-specific distribution of phospholipids (lipid scrambling or lipid flip-flop) between the inner and outer leaflet of the plasma membrane resulting in collapse of the phospholipid asymmetry which leads to phosphatidylserine externalization on the cell surface. Mediates calcium-dependent phosphatidylserine externalization and apoptosis in neurons via its association with TRPC5. Also exhibits magnesium-dependent nuclease activity against double-stranded DNA and RNA but not single-stranded DNA and can enhance DNA decatenation mediated by TOP2A. Negatively regulates FcR-mediated phagocytosis in differentiated macrophages. May contribute to cytokine-regulated cell proliferation and differentiation. The chain is Phospholipid scramblase 1 (Plscr1) from Mus musculus (Mouse).